The following is a 612-amino-acid chain: Peroxisomal carnitine O-octanoyltransferase (612 aa).

The residue at position 1 (methionine 1) is an N-acetylmethionine. Residues lysine 40 and lysine 57 each carry the N6-succinyllysine modification. Histidine 327 serves as the catalytic Proton acceptor. CoA-binding positions include lysine 406 and 410 to 417 (KNKMLHPD). Lysine 406 carries the N6-acetyllysine; alternate modification. At lysine 406 the chain carries N6-succinyllysine; alternate. Positions 439, 441, and 452 each coordinate (R)-carnitine. The Microbody targeting signal signature appears at 610 to 612 (THL).

The protein belongs to the carnitine/choline acetyltransferase family. Monomer.

Its subcellular location is the peroxisome. It catalyses the reaction octanoyl-CoA + (R)-carnitine = O-octanoyl-(R)-carnitine + CoA. The enzyme catalyses 4,8-dimethylnonanoyl-CoA + (R)-carnitine = O-4,8-dimethylnonanoyl-(R)-carnitine + CoA. It participates in lipid metabolism; fatty acid beta-oxidation. Beta-oxidation of fatty acids. The highest activity concerns the C6 to C10 chain length substrate. Converts the end product of pristanic acid beta oxidation, 4,8-dimethylnonanoyl-CoA, to its corresponding carnitine ester. The protein is Peroxisomal carnitine O-octanoyltransferase (CROT) of Homo sapiens (Human).